Consider the following 573-residue polypeptide: NEDD4-binding protein 3-A (573 aa).

Disordered regions lie at residues 168–216 (LNTM…INSL) and 382–407 (LRGESEELRQKQSQSDNSGPKLEDSK). Composition is skewed to polar residues over residues 184–196 (QPSNSHSNNQSES) and 207–216 (DSRQNSINSL). Residues 289 to 539 (VEDVARQLEE…KEIQSSYREM (251 aa)) adopt a coiled-coil conformation.

The protein belongs to the N4BP3 family.

It is found in the cytoplasmic vesicle. The protein localises to the cell projection. Its subcellular location is the axon. The protein resides in the dendrite. Functionally, plays a role in axon and dendrite arborization during cranial nerve development. Also important for neural crest migration and early development of other anterior structures including eye, brain and cranial cartilage. The protein is NEDD4-binding protein 3-A of Xenopus laevis (African clawed frog).